The following is a 306-amino-acid chain: Ribonuclease Z (306 aa).

Residues H63, H65, D67, H68, H140, D211, and H269 each contribute to the Zn(2+) site. The active-site Proton acceptor is D67.

This sequence belongs to the RNase Z family. In terms of assembly, homodimer. It depends on Zn(2+) as a cofactor.

It catalyses the reaction Endonucleolytic cleavage of RNA, removing extra 3' nucleotides from tRNA precursor, generating 3' termini of tRNAs. A 3'-hydroxy group is left at the tRNA terminus and a 5'-phosphoryl group is left at the trailer molecule.. Functionally, zinc phosphodiesterase, which displays some tRNA 3'-processing endonuclease activity. Probably involved in tRNA maturation, by removing a 3'-trailer from precursor tRNA. This chain is Ribonuclease Z, found in Listeria welshimeri serovar 6b (strain ATCC 35897 / DSM 20650 / CCUG 15529 / CIP 8149 / NCTC 11857 / SLCC 5334 / V8).